Reading from the N-terminus, the 88-residue chain is CLAVATA3/ESR (CLE)-related protein 42 (88 aa).

An N-terminal signal peptide occupies residues M1–Q24. Residues K69–R88 are disordered. 2 positions are modified to hydroxyproline: P79 and P82. A glycan (O-linked (Ara...) hydroxyproline) is linked at P82.

It belongs to the CLV3/ESR signal peptide family. Post-translationally, the O-glycosylation (arabinosylation) of the hydroxyproline Pro-82 enhances binding affinity of the CLE42p peptide for its receptor. Expressed at low levels in seedlings, roots and inflorescence.

It localises to the secreted. The protein resides in the extracellular space. Extracellular signal peptide that regulates cell fate. Represses tracheary element differentiation but promotes the formation of procambial cells. The chain is CLAVATA3/ESR (CLE)-related protein 42 from Arabidopsis thaliana (Mouse-ear cress).